The sequence spans 79 residues: RNA-binding protein KhpA (79 aa).

The KH domain maps to 30-79 (GRVLEVRVHPDDLGKVIGRNGRTARALRTVVGAIGGRGVRVDLVDVDHVR).

This sequence belongs to the KhpA RNA-binding protein family.

It is found in the cytoplasm. Its subcellular location is the nucleoid. Its function is as follows. A probable RNA-binding protein. The polypeptide is RNA-binding protein KhpA (Streptomyces coelicolor (strain ATCC BAA-471 / A3(2) / M145)).